The primary structure comprises 1013 residues: Tolloid-like protein 1 (1013 aa).

The signal sequence occupies residues 1–30 (MGLQALSPRMLLWLVVSGIVFSRVLWVCAG). Positions 31–147 (LDYDYTFDGN…EQSEKNRVPR (117 aa)) are excised as a propeptide. Residues 124–150 (QNNTMKGKAPPKLSEQSEKNRVPRAAT) are disordered. The Peptidase M12A domain maps to 148–347 (AATSRTERIW…AQARKLYRCP (200 aa)). Asn169 is a glycosylation site (N-linked (GlcNAc...) asparagine). Cystine bridges form between Cys190–Cys346, Cys210–Cys232, Cys212–Cys213, and Cys349–Cys375. His240 contacts Zn(2+). Glu241 is an active-site residue. Zn(2+)-binding residues include His244 and His250. CUB domains follow at residues 349 to 461 (CGET…YEAI) and 462 to 574 (CGGE…FFKE). Residues Asn359 and Asn390 are each glycosylated (N-linked (GlcNAc...) asparagine). Disulfide bonds link Cys402–Cys424, Cys462–Cys488, Cys515–Cys537, Cys578–Cys590, Cys586–Cys599, Cys601–Cys614, Cys618–Cys644, Cys671–Cys693, Cys734–Cys745, Cys741–Cys754, Cys756–Cys769, Cys774–Cys800, Cys827–Cys849, Cys887–Cys917, and Cys944–Cys966. An EGF-like 1; calcium-binding domain is found at 574–615 (EEDECAKPDRGGCEQRCLNTLGSYQCACEPGYELGPDRRSCE). The 113-residue stretch at 618–730 (CGGLLTKLNG…KGFKAHFFSD (113 aa)) folds into the CUB 3 domain. Asn626 carries an N-linked (GlcNAc...) asparagine glycan. The 41-residue stretch at 730–770 (DKDECSKDNGGCQHECVNTMGSYTCQCRNGFVLHENKHDCK) folds into the EGF-like 2; calcium-binding domain. CUB domains follow at residues 774–886 (CEQK…HSTE) and 887–1003 (CGGR…YKSI).

Zn(2+) is required as a cofactor. In terms of tissue distribution, highly expressed in brain and kidney and weakly in lung, skeletal muscle. A perceptible level of expression is observed in heart and testis.

It localises to the secreted. In terms of biological role, protease which processes procollagen C-propeptides, such as chordin, pro-biglycan and pro-lysyl oxidase. Required for the embryonic development, especially heart development. Predominant protease, which in the development, influences dorsal-ventral patterning and skeletogenesis. The protein is Tolloid-like protein 1 (Tll1) of Mus musculus (Mouse).